The primary structure comprises 119 residues: ATP-dependent Clp protease adapter protein ClpS (119 aa).

Positions methionine 1–aspartate 24 are disordered.

Belongs to the ClpS family. In terms of assembly, binds to the N-terminal domain of the chaperone ClpA.

Functionally, involved in the modulation of the specificity of the ClpAP-mediated ATP-dependent protein degradation. The polypeptide is ATP-dependent Clp protease adapter protein ClpS (Gluconobacter oxydans (strain 621H) (Gluconobacter suboxydans)).